Reading from the N-terminus, the 125-residue chain is Photosystem II extrinsic protein U (125 aa).

The first 29 residues, 1–29, serve as a signal peptide directing secretion; the sequence is MKRLLSWLTGLVVIAGLLIGLLVPPSVSA.

Belongs to the PsbU family. In terms of assembly, PSII is composed of 1 copy each of membrane proteins PsbA, PsbB, PsbC, PsbD, PsbE, PsbF, PsbH, PsbI, PsbJ, PsbK, PsbL, PsbM, PsbT, PsbX, PsbY, PsbZ, Psb30/Ycf12, peripheral proteins PsbO, CyanoQ (PsbQ), PsbU, PsbV and a large number of cofactors. It forms dimeric complexes.

The protein localises to the cellular thylakoid membrane. One of the extrinsic, lumenal subunits of photosystem II (PSII). PSII is a light-driven water plastoquinone oxidoreductase, using light energy to abstract electrons from H(2)O, generating a proton gradient subsequently used for ATP formation. The extrinsic proteins stabilize the structure of photosystem II oxygen-evolving complex (OEC), the ion environment of oxygen evolution and protect the OEC against heat-induced inactivation. In Synechococcus sp. (strain CC9311), this protein is Photosystem II extrinsic protein U.